The following is a 616-amino-acid chain: Dihydroxy-acid dehydratase (616 aa).

Asp81 is a binding site for Mg(2+). Cys122 provides a ligand contact to [2Fe-2S] cluster. The Mg(2+) site is built by Asp123 and Lys124. An N6-carboxylysine modification is found at Lys124. Cys195 contacts [2Fe-2S] cluster. Glu491 provides a ligand contact to Mg(2+). Catalysis depends on Ser517, which acts as the Proton acceptor.

It belongs to the IlvD/Edd family. In terms of assembly, homodimer. [2Fe-2S] cluster is required as a cofactor. It depends on Mg(2+) as a cofactor.

The catalysed reaction is (2R)-2,3-dihydroxy-3-methylbutanoate = 3-methyl-2-oxobutanoate + H2O. It carries out the reaction (2R,3R)-2,3-dihydroxy-3-methylpentanoate = (S)-3-methyl-2-oxopentanoate + H2O. It functions in the pathway amino-acid biosynthesis; L-isoleucine biosynthesis; L-isoleucine from 2-oxobutanoate: step 3/4. The protein operates within amino-acid biosynthesis; L-valine biosynthesis; L-valine from pyruvate: step 3/4. Its function is as follows. Functions in the biosynthesis of branched-chain amino acids. Catalyzes the dehydration of (2R,3R)-2,3-dihydroxy-3-methylpentanoate (2,3-dihydroxy-3-methylvalerate) into 2-oxo-3-methylpentanoate (2-oxo-3-methylvalerate) and of (2R)-2,3-dihydroxy-3-methylbutanoate (2,3-dihydroxyisovalerate) into 2-oxo-3-methylbutanoate (2-oxoisovalerate), the penultimate precursor to L-isoleucine and L-valine, respectively. The polypeptide is Dihydroxy-acid dehydratase (Salmonella agona (strain SL483)).